A 174-amino-acid polypeptide reads, in one-letter code: Crossover junction endodeoxyribonuclease RuvC (174 aa).

Active-site residues include Asp-8, Glu-67, and Asp-139. 3 residues coordinate Mg(2+): Asp-8, Glu-67, and Asp-139.

It belongs to the RuvC family. In terms of assembly, homodimer which binds Holliday junction (HJ) DNA. The HJ becomes 2-fold symmetrical on binding to RuvC with unstacked arms; it has a different conformation from HJ DNA in complex with RuvA. In the full resolvosome a probable DNA-RuvA(4)-RuvB(12)-RuvC(2) complex forms which resolves the HJ. Mg(2+) is required as a cofactor.

The protein resides in the cytoplasm. The enzyme catalyses Endonucleolytic cleavage at a junction such as a reciprocal single-stranded crossover between two homologous DNA duplexes (Holliday junction).. Its function is as follows. The RuvA-RuvB-RuvC complex processes Holliday junction (HJ) DNA during genetic recombination and DNA repair. Endonuclease that resolves HJ intermediates. Cleaves cruciform DNA by making single-stranded nicks across the HJ at symmetrical positions within the homologous arms, yielding a 5'-phosphate and a 3'-hydroxyl group; requires a central core of homology in the junction. The consensus cleavage sequence is 5'-(A/T)TT(C/G)-3'. Cleavage occurs on the 3'-side of the TT dinucleotide at the point of strand exchange. HJ branch migration catalyzed by RuvA-RuvB allows RuvC to scan DNA until it finds its consensus sequence, where it cleaves and resolves the cruciform DNA. In Pseudomonas fluorescens (strain SBW25), this protein is Crossover junction endodeoxyribonuclease RuvC.